A 360-amino-acid polypeptide reads, in one-letter code: MRTDLFDFELPAGSIALRPASPRDSARMLVVQPGSGVRDQQVSDLPEWLRPGDQLVVNDTRVIAAQLHGRRIGREAEPRIDATLIKRLDGSRWSALVRPARKLMAGDIVRLGNEGRVCFLGHLDARVESKGEEGEVTFAFSFHGPMLDQAIAELGSTPLPPYIASKRAPDDRDASDYQTMFATHEGAVAAPTAGLHFTPEIETALRGRGVGLHRITLHVGAGTFLPVKVDDTAGHRMHSEWGAISTETADALNAARSRGGRIVAVGTTSLRLLESAADDDGRIKPFTGETAIFITPGHRFRAVDILMTNFHLPRSTLFMLVSAFSGLETMKQAYAHAISAGYRFYSYGDACLLFPERAGA.

It belongs to the QueA family. As to quaternary structure, monomer.

The protein resides in the cytoplasm. It catalyses the reaction 7-aminomethyl-7-carbaguanosine(34) in tRNA + S-adenosyl-L-methionine = epoxyqueuosine(34) in tRNA + adenine + L-methionine + 2 H(+). It functions in the pathway tRNA modification; tRNA-queuosine biosynthesis. Its function is as follows. Transfers and isomerizes the ribose moiety from AdoMet to the 7-aminomethyl group of 7-deazaguanine (preQ1-tRNA) to give epoxyqueuosine (oQ-tRNA). This Nitrobacter winogradskyi (strain ATCC 25391 / DSM 10237 / CIP 104748 / NCIMB 11846 / Nb-255) protein is S-adenosylmethionine:tRNA ribosyltransferase-isomerase.